A 162-amino-acid chain; its full sequence is uncharacterized protein (162 aa).

Residues Asp-129–Gly-161 adopt a coiled-coil conformation.

This is an uncharacterized protein from Aquifex aeolicus (strain VF5).